Reading from the N-terminus, the 593-residue chain is Melanopsin-A (593 aa).

The Extracellular portion of the chain corresponds to 1–77 (MMSGAAHSVR…VDVPDHAHYT (77 aa)). Residues 78–98 (IGAVILTVGITGMLGNFLVIY) traverse the membrane as a helical segment. Over 99-112 (AFSRSRTLRTPANL) the chain is Cytoplasmic. Residues 113–133 (FIINLAITDFLMCATQAPIFF) traverse the membrane as a helical segment. Topologically, residues 134-150 (TTSMHKRWIFGEKGCEL) are extracellular. Cys148 and Cys226 form a disulfide bridge. A helical transmembrane segment spans residues 151-171 (YAFCGALFGICSMITLMVIAV). The Cytoplasmic portion of the chain corresponds to 172–191 (DRYFVITRPLASIGVLSQKR). A helical transmembrane segment spans residues 192 to 212 (ALLILLVAWVYSLGWSLPPFF). Residues 213-243 (GWSAYVPEGLLTSCTWDYMTFTPSVRAYTML) are Extracellular-facing. The helical transmembrane segment at 244–264 (LFIFVFFIPLIVIIYCYFFIF) threads the bilayer. Over 265 to 300 (RSIRTTNEAVGKINGDNKRDSMKRFQRLKNEWKMAK) the chain is Cytoplasmic. A helical membrane pass occupies residues 301–321 (IALIVILMYVISWSPYSTVAL). The Extracellular portion of the chain corresponds to 322 to 336 (TAFAGYSDFLTPYMN). A helical transmembrane segment spans residues 337 to 357 (SVPAVIAKASAIHNPIIYAIT). Position 344 is an N6-(retinylidene)lysine (Lys344). Topologically, residues 358–593 (HPKYRLAIAK…HIDNHRPQYL (236 aa)) are cytoplasmic. Disordered stretches follow at residues 397–449 (TVTS…RQVS) and 547–593 (RSNV…PQYL). Residues 414–449 (TGKSRLSSASDSESGWTDTEADLSSMSSRPASRQVS) are compositionally biased toward polar residues. Basic and acidic residues predominate over residues 581 to 593 (ESGHIDNHRPQYL).

Belongs to the G-protein coupled receptor 1 family. Opsin subfamily.

It localises to the cell membrane. Its function is as follows. Photoreceptor implicated in non-image-forming responses to light. May be able to isomerize covalently bound all-trans retinal back to 11-cis retinal. This Danio rerio (Zebrafish) protein is Melanopsin-A (opn4a).